The chain runs to 376 residues: Deoxyuridine 5'-triphosphate nucleotidohydrolase (376 aa).

This sequence belongs to the dUTPase family. It depends on Mg(2+) as a cofactor.

The catalysed reaction is dUTP + H2O = dUMP + diphosphate + H(+). Functionally, involved in nucleotide metabolism: produces dUMP, the immediate precursor of thymidine nucleotides and decreases the intracellular concentration of dUTP to avoid uracil incorporation into viral DNA. In Human herpesvirus 6A (strain GS) (HHV-6 variant A), this protein is Deoxyuridine 5'-triphosphate nucleotidohydrolase.